A 96-amino-acid polypeptide reads, in one-letter code: Acetolactate synthase isozyme 1 small subunit (96 aa).

One can recognise an ACT domain in the interval 10-83 (ILELTVRNHP…DVVKVQRNQS (74 aa)).

This sequence belongs to the acetolactate synthase small subunit family. As to quaternary structure, dimer of large and small chains.

It carries out the reaction 2 pyruvate + H(+) = (2S)-2-acetolactate + CO2. It participates in amino-acid biosynthesis; L-isoleucine biosynthesis; L-isoleucine from 2-oxobutanoate: step 1/4. The protein operates within amino-acid biosynthesis; L-valine biosynthesis; L-valine from pyruvate: step 1/4. This Escherichia coli O157:H7 protein is Acetolactate synthase isozyme 1 small subunit (ilvN).